A 213-amino-acid chain; its full sequence is Na(+)-translocating NADH-quinone reductase subunit D (213 aa).

6 consecutive transmembrane segments (helical) span residues leucine 22 to leucine 42, threonine 43 to arginine 63, isoleucine 77 to isoleucine 97, leucine 101 to methionine 121, phenylalanine 131 to isoleucine 151, and leucine 183 to valine 203.

It belongs to the NqrDE/RnfAE family. In terms of assembly, composed of six subunits; NqrA, NqrB, NqrC, NqrD, NqrE and NqrF.

Its subcellular location is the cell inner membrane. The enzyme catalyses a ubiquinone + n Na(+)(in) + NADH + H(+) = a ubiquinol + n Na(+)(out) + NAD(+). Functionally, NQR complex catalyzes the reduction of ubiquinone-1 to ubiquinol by two successive reactions, coupled with the transport of Na(+) ions from the cytoplasm to the periplasm. NqrA to NqrE are probably involved in the second step, the conversion of ubisemiquinone to ubiquinol. In Chlamydia trachomatis serovar A (strain ATCC VR-571B / DSM 19440 / HAR-13), this protein is Na(+)-translocating NADH-quinone reductase subunit D.